The following is a 462-amino-acid chain: Cysteine--tRNA ligase (462 aa).

Zn(2+) is bound at residue C27. The short motif at 29 to 39 is the 'HIGH' region element; sequence PTVYNYIHVGN. Zn(2+)-binding residues include C209, H234, and E238. The short motif at 266-270 is the 'KMSKS' region element; the sequence is KMSKS. K269 contacts ATP.

Belongs to the class-I aminoacyl-tRNA synthetase family. Monomer. Requires Zn(2+) as cofactor.

It is found in the cytoplasm. The enzyme catalyses tRNA(Cys) + L-cysteine + ATP = L-cysteinyl-tRNA(Cys) + AMP + diphosphate. In Finegoldia magna (strain ATCC 29328 / DSM 20472 / WAL 2508) (Peptostreptococcus magnus), this protein is Cysteine--tRNA ligase.